We begin with the raw amino-acid sequence, 694 residues long: NADPH--cytochrome P450 reductase (694 aa).

Residues 1–8 (MAQLDTLD) are Lumenal-facing. A helical membrane pass occupies residues 9–31 (LVVLAVLLVGSVAYFTKGTYWAV). Over 32–694 (AKDPYASTGP…RGRYQEDVWS (663 aa)) the chain is Cytoplasmic. Residues 66–220 (CVIFYGSQTG…DFLAWKEPMW (155 aa)) enclose the Flavodoxin-like domain. Residues 72–77 (SQTGTA), 123–126 (ATYG), 168–177 (LGNNTYEHYN), and Asp-203 each bind FMN. In terms of domain architecture, FAD-binding FR-type spans 276–537 (HNPFIAPIAE…HVRHSNFKLP (262 aa)). Residue Arg-295 coordinates NADP(+). Residues 450–453 (RYYS), 468–470 (TAV), and 485–488 (GVTT) each bind FAD. Residues Thr-551, 613–614 (SR), 619–623 (KVYVQ), and Glu-655 contribute to the NADP(+) site. Residue Trp-693 coordinates FAD.

The protein belongs to the NADPH--cytochrome P450 reductase family. In the N-terminal section; belongs to the flavodoxin family. This sequence in the C-terminal section; belongs to the flavoprotein pyridine nucleotide cytochrome reductase family. The cofactor is FAD. It depends on FMN as a cofactor.

It is found in the endoplasmic reticulum membrane. It localises to the mitochondrion outer membrane. The protein localises to the cell membrane. The enzyme catalyses 2 oxidized [cytochrome P450] + NADPH = 2 reduced [cytochrome P450] + NADP(+) + H(+). In terms of biological role, this enzyme is required for electron transfer from NADP to cytochrome P450 in microsomes. It can also provide electron transfer to heme oxygenase and cytochrome B5. Involved in ergosterol biosynthesis. This chain is NADPH--cytochrome P450 reductase, found in Aspergillus niger.